Reading from the N-terminus, the 892-residue chain is von Willebrand factor A domain-containing protein 7 (892 aa).

A signal peptide spans 1-27; it reads MLPVEVPLSQLGPPVLLLQLLLPPTSA. An N-linked (GlcNAc...) asparagine glycan is attached at Asn-54. The segment at 231-272 is disordered; it reads YFGTNPPKPPGKCSHGGRFDQSSSQPPRGGINKDSTSPSFSP. In terms of domain architecture, VWFA spans 313–495; the sequence is ASSLSFVLDT…HIRDVAAVVG (183 aa).

It is found in the secreted. In Rattus norvegicus (Rat), this protein is von Willebrand factor A domain-containing protein 7 (Vwa7).